Here is a 512-residue protein sequence, read N- to C-terminus: MSQDQPIVLDPTYASFDAAARPADLGATHFIGIGGAGMSVLAEMLHAEGVAVDGSDRAHSAKTDRLETLGITVEFGQRAENVAQAETVVYSSAIKPDNPEIVAAHAAGKRIVHRSDILALLMNGKRAVTVAGAHGKTTTSSMLSHILVNAGADPSYAIGGFIQGPDGTTLDGGHAGKGDILVAEADESDGSFAKYHPTIAIITNCEADHLDHYGDEAHYRAAFVAHAGRATGHVIISIDDPDGLAVLEALPADVKSHTVAYGTTARESLPDLGGAAYVWIASESETAGSGVEQLTLHLPAAVTAGEPVSQSVALKVPGVHNARNAAAAISAAVLLGVSPADAANAAGTFLGAARRFQVRGTVKQVTVVDDYAHHPTEIAALLDAARRRYPDSTIRVIFQPHLFSRTKFFAHQFAKSLAKADDVIITGIFPAREKQADFPDISPSTIVDAAAGLKDASAGTWIQPVEDMCLAAKMMAMRAHHGDVIFTVGAGDITDMDQVLLTALEAHRESCE.

Residue 132–138 (GAHGKTT) participates in ATP binding.

This sequence belongs to the MurCDEF family.

Its subcellular location is the cytoplasm. The enzyme catalyses UDP-N-acetyl-alpha-D-muramate + L-alanine + ATP = UDP-N-acetyl-alpha-D-muramoyl-L-alanine + ADP + phosphate + H(+). It participates in cell wall biogenesis; peptidoglycan biosynthesis. In terms of biological role, cell wall formation. In Bifidobacterium longum (strain DJO10A), this protein is UDP-N-acetylmuramate--L-alanine ligase.